We begin with the raw amino-acid sequence, 214 residues long: dITP/XTP pyrophosphatase (214 aa).

A substrate-binding site is contributed by 16 to 21 (THNPGK). Residues Asp-48 and Asp-77 each contribute to the Mg(2+) site. Asp-77 acts as the Proton acceptor in catalysis. Substrate-binding positions include Ser-78, 163-166 (FGYD), Lys-186, and 198-199 (HR).

The protein belongs to the HAM1 NTPase family. In terms of assembly, homodimer. The cofactor is Mg(2+).

The catalysed reaction is XTP + H2O = XMP + diphosphate + H(+). It catalyses the reaction dITP + H2O = dIMP + diphosphate + H(+). The enzyme catalyses ITP + H2O = IMP + diphosphate + H(+). In terms of biological role, pyrophosphatase that catalyzes the hydrolysis of nucleoside triphosphates to their monophosphate derivatives, with a high preference for the non-canonical purine nucleotides XTP (xanthosine triphosphate), dITP (deoxyinosine triphosphate) and ITP. Seems to function as a house-cleaning enzyme that removes non-canonical purine nucleotides from the nucleotide pool, thus preventing their incorporation into DNA/RNA and avoiding chromosomal lesions. This is dITP/XTP pyrophosphatase from Bradyrhizobium sp. (strain BTAi1 / ATCC BAA-1182).